The following is a 364-amino-acid chain: MQERHTEQDYRALLIADTPIIDVRAPIEFEQGAMPAAINLPLMNNDERVAVGTCYKQQGSDAALALGHKLVAGEIRQQRMYAWRAACLQNPQGILCCARGGQRSHIVQSWLHAAGIDYPLVEGGYKALRQTTIQATIELAQKPIVLIGGCTGCGKTLLVQQQPNGVDLEGLARHRGSAFGRTLQPQLSQASFENLLAAEMLKTDARQNLRLWVLEDESRMIGSNHLPECLRERMTQAAIAVVEDPFEIRLERLNEEYFLRMHHDFTHAYGDEQGWQEYCEYLHHGLSAIKRRLGLQRYNELAARLDAALTTQLATGSTDGHLAWLVPLLKEYYDPMYRYQLEKKAEKVVFRGEWAEVAEWVKAR.

Residues L14–I137 form the Rhodanese domain. Catalysis depends on C97, which acts as the S-selanylcysteine intermediate.

Belongs to the SelU family. As to quaternary structure, monomer.

It catalyses the reaction 5-methylaminomethyl-2-thiouridine(34) in tRNA + selenophosphate + (2E)-geranyl diphosphate + H2O + H(+) = 5-methylaminomethyl-2-selenouridine(34) in tRNA + (2E)-thiogeraniol + phosphate + diphosphate. The catalysed reaction is 5-methylaminomethyl-2-thiouridine(34) in tRNA + (2E)-geranyl diphosphate = 5-methylaminomethyl-S-(2E)-geranyl-thiouridine(34) in tRNA + diphosphate. It carries out the reaction 5-methylaminomethyl-S-(2E)-geranyl-thiouridine(34) in tRNA + selenophosphate + H(+) = 5-methylaminomethyl-2-(Se-phospho)selenouridine(34) in tRNA + (2E)-thiogeraniol. The enzyme catalyses 5-methylaminomethyl-2-(Se-phospho)selenouridine(34) in tRNA + H2O = 5-methylaminomethyl-2-selenouridine(34) in tRNA + phosphate. Functionally, involved in the post-transcriptional modification of the uridine at the wobble position (U34) of tRNA(Lys), tRNA(Glu) and tRNA(Gln). Catalyzes the conversion of 2-thiouridine (S2U-RNA) to 2-selenouridine (Se2U-RNA). Acts in a two-step process involving geranylation of 2-thiouridine (S2U) to S-geranyl-2-thiouridine (geS2U) and subsequent selenation of the latter derivative to 2-selenouridine (Se2U) in the tRNA chain. The polypeptide is tRNA 2-selenouridine synthase (Escherichia coli O139:H28 (strain E24377A / ETEC)).